The following is a 340-amino-acid chain: Probable peroxidase 61 (340 aa).

The signal sequence occupies residues Met-1 to Ala-25. Intrachain disulfides connect Cys-46–Cys-122, Cys-79–Cys-84, Cys-128–Cys-331, and Cys-205–Cys-237. Asn-63 carries N-linked (GlcNAc...) asparagine glycosylation. Arg-73 is a catalytic residue. 5 residues coordinate Ca(2+): Asp-78, Val-81, Gly-83, Asp-85, and Ser-87. Residue Pro-168 participates in substrate binding. His-198 is a binding site for heme b. Ser-199 contributes to the Ca(2+) binding site. N-linked (GlcNAc...) asparagine glycosylation is present at Asn-226. 2 residues coordinate Ca(2+): Asp-255 and Ser-258.

It belongs to the peroxidase family. Classical plant (class III) peroxidase subfamily. Requires heme b as cofactor. It depends on Ca(2+) as a cofactor.

It is found in the secreted. The enzyme catalyses 2 a phenolic donor + H2O2 = 2 a phenolic radical donor + 2 H2O. In terms of biological role, removal of H(2)O(2), oxidation of toxic reductants, biosynthesis and degradation of lignin, suberization, auxin catabolism, response to environmental stresses such as wounding, pathogen attack and oxidative stress. The enzyme activity has to be proved. In Arabidopsis thaliana (Mouse-ear cress), this protein is Probable peroxidase 61 (PER61).